Here is a 492-residue protein sequence, read N- to C-terminus: Probable proline dehydrogenase, mitochondrial (492 aa).

It belongs to the proline oxidase family. Requires FAD as cofactor.

It localises to the mitochondrion. It catalyses the reaction L-proline + a quinone = (S)-1-pyrroline-5-carboxylate + a quinol + H(+). Converts proline to delta-1-pyrroline-5-carboxylate. The protein is Probable proline dehydrogenase, mitochondrial of Schizosaccharomyces pombe (strain 972 / ATCC 24843) (Fission yeast).